Reading from the N-terminus, the 257-residue chain is Imidazole glycerol phosphate synthase subunit HisF (257 aa).

Catalysis depends on residues Asp-11 and Asp-130.

The protein belongs to the HisA/HisF family. In terms of assembly, heterodimer of HisH and HisF.

Its subcellular location is the cytoplasm. The catalysed reaction is 5-[(5-phospho-1-deoxy-D-ribulos-1-ylimino)methylamino]-1-(5-phospho-beta-D-ribosyl)imidazole-4-carboxamide + L-glutamine = D-erythro-1-(imidazol-4-yl)glycerol 3-phosphate + 5-amino-1-(5-phospho-beta-D-ribosyl)imidazole-4-carboxamide + L-glutamate + H(+). The protein operates within amino-acid biosynthesis; L-histidine biosynthesis; L-histidine from 5-phospho-alpha-D-ribose 1-diphosphate: step 5/9. Functionally, IGPS catalyzes the conversion of PRFAR and glutamine to IGP, AICAR and glutamate. The HisF subunit catalyzes the cyclization activity that produces IGP and AICAR from PRFAR using the ammonia provided by the HisH subunit. The chain is Imidazole glycerol phosphate synthase subunit HisF from Vibrio campbellii (strain ATCC BAA-1116).